Consider the following 270-residue polypeptide: Zinc finger protein ZAT2 (270 aa).

Polar residues-rich tracts occupy residues 1–28 and 36–48; these read MSNT…YNQN and LTNN…SSSP. The interval 1 to 64 is disordered; the sequence is MSNTSNSDPN…QPDPDASQIA (64 aa). The segment at 65 to 87 adopts a C2H2-type 1 zinc-finger fold; the sequence is RPCTECGKQFGSLKALFGHMRCH. The segment at 95 to 119 is disordered; the sequence is INPPSNFKRRINSNAASSSSSWDPS. Residues 106–115 show a composition bias toward low complexity; sequence NSNAASSSSS. 2 consecutive C2H2-type zinc fingers follow at residues 148 to 170 and 211 to 233; these read FECD…RATH and HRCN…MRCH.

As to quaternary structure, interacts (via the EAR motif) with TPL. In terms of tissue distribution, expressed exclusively in pollen.

It is found in the nucleus. Functionally, mediates the regulation of male germ cell division by DUO1. This is Zinc finger protein ZAT2 from Arabidopsis thaliana (Mouse-ear cress).